Reading from the N-terminus, the 547-residue chain is Chaperonin GroEL 1 (547 aa).

ATP is bound by residues 30 to 33 (TLGP), Lys51, 87 to 91 (DGTTT), Gly415, and Asp496.

The protein belongs to the chaperonin (HSP60) family. As to quaternary structure, forms a cylinder of 14 subunits composed of two heptameric rings stacked back-to-back. Interacts with the co-chaperonin GroES.

It is found in the cytoplasm. The enzyme catalyses ATP + H2O + a folded polypeptide = ADP + phosphate + an unfolded polypeptide.. In terms of biological role, together with its co-chaperonin GroES, plays an essential role in assisting protein folding. The GroEL-GroES system forms a nano-cage that allows encapsulation of the non-native substrate proteins and provides a physical environment optimized to promote and accelerate protein folding. The polypeptide is Chaperonin GroEL 1 (Rhodopseudomonas palustris (strain BisB5)).